A 90-amino-acid chain; its full sequence is Sec-independent protein translocase protein TatAo (90 aa).

A helical membrane pass occupies residues 8-28; it reads FPGLPGGPELLIVLLIVVLLF. The tract at residues 39 to 90 is disordered; the sequence is SSGQAMGEFRRGREEIEEELKKGAEGGDDEGENGDEAEADDADATETEAESR. Residues 46–63 are compositionally biased toward basic and acidic residues; sequence EFRRGREEIEEELKKGAE. Over residues 64–90 the composition is skewed to acidic residues; that stretch reads GGDDEGENGDEAEADDADATETEAESR.

Belongs to the TatA/E family. In terms of assembly, forms a complex with TatC. Cytoplasmic and membrane-bound TatA form high-molecular-weight complexes.

It is found in the cell membrane. Its subcellular location is the cytoplasm. Part of the twin-arginine translocation (Tat) system that transports large folded proteins containing a characteristic twin-arginine motif in their signal peptide across membranes. TatA could form the protein-conducting channel of the Tat system. The polypeptide is Sec-independent protein translocase protein TatAo (Haloferax volcanii (strain ATCC 29605 / DSM 3757 / JCM 8879 / NBRC 14742 / NCIMB 2012 / VKM B-1768 / DS2) (Halobacterium volcanii)).